The primary structure comprises 666 residues: TATA box-binding protein-associated factor RNA polymerase I subunit B (666 aa).

The RRN7-type zinc-finger motif lies at 1-29 (MICTECENDAFDEEDDGYYYCQRCGVQVE). Zn(2+) contacts are provided by Cys3, Cys6, Cys21, and Cys24. The segment at 30 to 64 (NLIQTGVDDGDLIGEGGGTQGALYNPKHRRTEPQP) is B-reader. 2 disordered regions span residues 45 to 110 (GGGT…VDKE) and 189 to 208 (DSEH…LKRH). The segment at 65-80 (ITPSQPRFTDDTSRYS) is B-linker. The segment covering 78 to 89 (RYSQFKSQFESE) has biased composition (polar residues). The N-terminal cyclin fold stretch occupies residues 81–285 (QFKSQFESEN…REQMGERSAA (205 aa)). Basic and acidic residues-rich tracts occupy residues 90-110 (NGNK…VDKE) and 189-202 (DSEH…VKDA). The segment at 286–288 (CPV) is C-terminal cyclin fold. Residues 515–548 (SDGNNPCSSSSRRNESVSIGLDLSSSEHRESSSP) form a disordered region. The span at 539–548 (SSEHRESSSP) shows a compositional bias: basic and acidic residues.

It belongs to the RRN7/TAF1B family. As to quaternary structure, interacts with TFIIF. Interacts with MEE14/CBP1, TBP1 and NRPB1 (via CTD). In terms of tissue distribution, expressed at high levels in seedlings, inflorescences and young siliques and at lower levels in roots. Not detected in leaves and stems. Detected in root tips and shoot apical meristems, in anthers, primarily in microspores with weaker expression in mature pollen grains and in the central cell of the mature female gametophyte. Not expressed in synergids, egg cells, antipodal cells, endosperm cells and fertilized egg cells.

Its subcellular location is the nucleus. It localises to the nucleolus. Functionally, component of RNA polymerase I core factor complex that acts as a GTF2B/TFIIB-like factor and plays a key role in multiple steps during transcription initiation such as pre-initiation complex (PIC) assembly and postpolymerase recruitment events in polymerase I (Pol I) transcription. Binds rDNA promoters and plays a role in Pol I recruitment. Required for the development of the one-cell zygote and endosperm in embryos. Required for micropylar pollen tube guidance, but has no effect on ovule development and gametophytic cell fate specification. May regulate the transcription of secreted cysteine-rich peptide (CRP) genes in the embryo sac. The sequence is that of TATA box-binding protein-associated factor RNA polymerase I subunit B from Arabidopsis thaliana (Mouse-ear cress).